The following is a 745-amino-acid chain: Copper-exporting P-type ATPase B (745 aa).

The tract at residues 1–76 (MNNGIDPENE…GMDHSHMDHE (76 aa)) is disordered. Residues 1 to 108 (MNNGIDPENE…HMGNFKQKFW (108 aa)) are Cytoplasmic-facing. A compositionally biased stretch (basic and acidic residues) spans 36–76 (LQEHGKMENMDQHHTHGHMERHQQMDHGHMSGMDHSHMDHE). 3 tandem repeats follow at residues 60 to 71 (MDHGHMSGMDHS), 73 to 84 (MDHEDMSGMNHS), and 86 to 97 (MGHENMSGMDHS). The interval 60–97 (MDHGHMSGMDHSHMDHEDMSGMNHSHMGHENMSGMDHS) is 3 X 12 AA approximate repeats. The helical transmembrane segment at 109–128 (LSLILAIPIILFSPMMGMSF) threads the bilayer. Residues 129–139 (PFQVTFPGSNW) are Extracellular-facing. A helical membrane pass occupies residues 140–160 (VVLVLATILFIYGGQPFLSGA). Residues 161-170 (KMELKQKSPA) are Cytoplasmic-facing. A helical transmembrane segment spans residues 171–191 (MMTLIAMGITVAYVYSVYSFI). Residues 192-200 (ANLINPHTH) are Extracellular-facing. Residues 201–217 (VMDFFWELATLIVIMLL) traverse the membrane as a helical segment. The Cytoplasmic segment spans residues 218-359 (GHWIEMNAVS…EFLSDKVAKW (142 aa)). Residues 360–379 (LFYVALVVGIIAFIAWLFLA) traverse the membrane as a helical segment. The Extracellular portion of the chain corresponds to 380 to 388 (NLPDALERM). Residues 389–409 (VTVFIIACPHALGLAIPLVVA) form a helical membrane-spanning segment. At 410–703 (RSTSIAAKNG…QNLWWGAGYN (294 aa)) the chain is on the cytoplasmic side. Residue aspartate 440 is the 4-aspartylphosphate intermediate of the active site. Aspartate 638 and aspartate 642 together coordinate Mg(2+). The chain crosses the membrane as a helical span at residues 704–721 (IIAIPLAAGILAPIGLIL). Over 722-723 (SP) the chain is Extracellular. A helical transmembrane segment spans residues 724–744 (AVGAVLMSLSTVVVALNALTL). A topological domain (cytoplasmic) is located at residue lysine 745.

The protein belongs to the cation transport ATPase (P-type) (TC 3.A.3) family. Type IB subfamily. Monomer.

The protein resides in the cell membrane. It catalyses the reaction Cu(+)(in) + ATP + H2O = Cu(+)(out) + ADP + phosphate + H(+). With respect to regulation, inhibited by vanadate. Involved in copper export. Can also export silver. The chain is Copper-exporting P-type ATPase B (copB) from Enterococcus hirae (strain ATCC 9790 / DSM 20160 / JCM 8729 / LMG 6399 / NBRC 3181 / NCIMB 6459 / NCDO 1258 / NCTC 12367 / WDCM 00089 / R).